The chain runs to 237 residues: Probable S-methyl-5'-thioinosine phosphorylase (237 aa).

Phosphate is bound by residues T12 and R54 to H55. M187 serves as a coordination point for substrate. Phosphate is bound at residue T188. N211 to A213 contributes to the substrate binding site.

The protein belongs to the PNP/MTAP phosphorylase family. MTAP subfamily. As to quaternary structure, homotrimer.

It carries out the reaction S-methyl-5'-thioinosine + phosphate = 5-(methylsulfanyl)-alpha-D-ribose 1-phosphate + hypoxanthine. It participates in purine metabolism; purine nucleoside salvage. In terms of biological role, catalyzes the reversible phosphorylation of S-methyl-5'-thioinosine (MTI) to hypoxanthine and 5-methylthioribose-1-phosphate. Involved in the breakdown of S-methyl-5'-thioadenosine (MTA), a major by-product of polyamine biosynthesis. Catabolism of (MTA) occurs via deamination to MTI and phosphorolysis to hypoxanthine. This Xylella fastidiosa (strain 9a5c) protein is Probable S-methyl-5'-thioinosine phosphorylase.